The sequence spans 447 residues: GTPase Der (447 aa).

EngA-type G domains are found at residues 3 to 167 (PVIA…VQER) and 181 to 354 (VKIA…AAAM). GTP-binding positions include 9-16 (GRPNVGKS), 56-60 (DTGGF), 119-122 (NKAE), 187-194 (GRPNVGKS), 234-238 (DTAGL), and 299-302 (NKWD). Residues 355-439 (VKLPTPQLTR…PLRIEFRTNK (85 aa)) enclose the KH-like domain.

The protein belongs to the TRAFAC class TrmE-Era-EngA-EngB-Septin-like GTPase superfamily. EngA (Der) GTPase family. As to quaternary structure, associates with the 50S ribosomal subunit.

In terms of biological role, GTPase that plays an essential role in the late steps of ribosome biogenesis. This is GTPase Der from Cupriavidus pinatubonensis (strain JMP 134 / LMG 1197) (Cupriavidus necator (strain JMP 134)).